The sequence spans 339 residues: Annexin A2 (339 aa).

Position 2 is an N-acetylserine (Ser2). Residues 2-24 (STVHEILCKLSLEGDHSTPPSAY) are S100A10-binding site. Position 24 is a phosphotyrosine; by SRC (Tyr24). Ser26 is modified (phosphoserine; by PKC). Annexin repeat units lie at residues 33–104 (FDAE…GLLK) and 105–176 (TPAQ…ALAK). Lys49 bears the N6-acetyllysine; alternate mark. Lys49 participates in a covalent cross-link: Glycyl lysine isopeptide (Lys-Gly) (interchain with G-Cter in SUMO1); alternate. Lys49 participates in a covalent cross-link: Glycyl lysine isopeptide (Lys-Gly) (interchain with G-Cter in SUMO2); alternate. Lys152 is modified (N6-acetyllysine). Ser184 is subject to Phosphoserine. 2 Annexin repeats span residues 189–261 (ELID…NLVQ) and 265–336 (NKPL…YLCG). At Tyr199 the chain carries Phosphotyrosine. The residue at position 227 (Lys227) is an N6-acetyllysine.

This sequence belongs to the annexin family. Heterotetramer containing 2 light chains of S100A10/p11 and 2 heavy chains of ANXA2/p36. Interacts with ATP1B1. Interacts with DYSF. Interacts with COCH. Interacts (via repeat Annexin 1) with PCSK9 (via the C-terminal domain); the interaction inhibits the degradation of LDLR. Interacts with CEACAM1 (via the cytoplasmic domain); this interaction is regulated by phosphorylation of CEACAM1. Interacts with APPL2 and APPL1; targets APPL2 to endosomes and acting in parallel to RAB5A. Interacts with S100A4. May interact with UBAP2. Interacts with PLEKHG4B; this interaction is required for PLEKHG4B localization to cell-cell adhesions. Post-translationally, ISGylated.

The protein localises to the secreted. Its subcellular location is the extracellular space. It localises to the extracellular matrix. It is found in the basement membrane. Functionally, calcium-regulated membrane-binding protein whose affinity for calcium is greatly enhanced by anionic phospholipids. It binds two calcium ions with high affinity. May be involved in heat-stress response. Inhibits PCSK9-enhanced LDLR degradation, probably reduces PCSK9 protein levels via a translational mechanism but also competes with LDLR for binding with PCSK9. Binds to endosomes damaged by phagocytosis of particulate wear debris and participates in endosomal membrane stabilization, thereby limiting NLRP3 inflammasome activation. Required for endothelial cell surface plasmin generation and may support fibrinolytic surveillance and neoangiogenesis. The sequence is that of Annexin A2 (ANXA2) from Canis lupus familiaris (Dog).